We begin with the raw amino-acid sequence, 279 residues long: MNKKNREVTSSWFTNLRDLVCAEFEKIEEEYAKAKGLKPGKFVRSSWERDGGGGGVMSVMKGEVFEKVGVNISTVFGEFSKAFRAEIPGAELDGKFFATGISLVAHLKSPLIPAMHFNTRYIETSKNWFGGGGDLTPFYPEEDETAKFHAAFKEACDKYDSGYYPKFKKQCDEYFYLKHRKEPRGVGGIFYDYLNSGNFEQDFSFTQDVGKALLSVYPEIVRNKLFLPWTDEQKEYQLIRRGRYVEFNLLYDRGTKFGLMTDGNVEAILMSLPPEVKWA.

Residue Ser-102 coordinates substrate. Residues His-106 and His-116 each coordinate a divalent metal cation. Catalysis depends on His-116, which acts as the Proton donor. 118–120 (NTR) contributes to the substrate binding site. The a divalent metal cation site is built by His-149 and His-179. The important for dimerization stretch occupies residues 244–279 (YVEFNLLYDRGTKFGLMTDGNVEAILMSLPPEVKWA).

This sequence belongs to the aerobic coproporphyrinogen-III oxidase family. Homodimer. A divalent metal cation serves as cofactor.

The protein resides in the cytoplasm. The catalysed reaction is coproporphyrinogen III + O2 + 2 H(+) = protoporphyrinogen IX + 2 CO2 + 2 H2O. The protein operates within porphyrin-containing compound metabolism; protoporphyrin-IX biosynthesis; protoporphyrinogen-IX from coproporphyrinogen-III (O2 route): step 1/1. Functionally, involved in the heme biosynthesis. Catalyzes the aerobic oxidative decarboxylation of propionate groups of rings A and B of coproporphyrinogen-III to yield the vinyl groups in protoporphyrinogen-IX. In Rickettsia bellii (strain OSU 85-389), this protein is Oxygen-dependent coproporphyrinogen-III oxidase.